The chain runs to 87 residues: Small ribosomal subunit protein uS17 (87 aa).

Belongs to the universal ribosomal protein uS17 family. In terms of assembly, part of the 30S ribosomal subunit.

Functionally, one of the primary rRNA binding proteins, it binds specifically to the 5'-end of 16S ribosomal RNA. The chain is Small ribosomal subunit protein uS17 from Onion yellows phytoplasma (strain OY-M).